Consider the following 196-residue polypeptide: Proteasome subunit beta (196 aa).

Residue methionine 1 is a propeptide, removed in mature form; by autocatalysis. Threonine 2 acts as the Nucleophile in catalysis.

This sequence belongs to the peptidase T1B family. In terms of assembly, the 20S proteasome core is composed of 14 alpha and 14 beta subunits that assemble into four stacked heptameric rings, resulting in a barrel-shaped structure. The two inner rings, each composed of seven catalytic beta subunits, are sandwiched by two outer rings, each composed of seven alpha subunits. The catalytic chamber with the active sites is on the inside of the barrel. Has a gated structure, the ends of the cylinder being occluded by the N-termini of the alpha-subunits. Is capped at one or both ends by the proteasome regulatory ATPase, PAN.

The protein resides in the cytoplasm. It catalyses the reaction Cleavage of peptide bonds with very broad specificity.. Its activity is regulated as follows. The formation of the proteasomal ATPase PAN-20S proteasome complex, via the docking of the C-termini of PAN into the intersubunit pockets in the alpha-rings, triggers opening of the gate for substrate entry. Interconversion between the open-gate and close-gate conformations leads to a dynamic regulation of the 20S proteasome proteolysis activity. In terms of biological role, component of the proteasome core, a large protease complex with broad specificity involved in protein degradation. This is Proteasome subunit beta from Nanoarchaeum equitans (strain Kin4-M).